We begin with the raw amino-acid sequence, 540 residues long: Extracellular matrix protein 1 (540 aa).

An N-terminal signal peptide occupies residues 1–19 (MGTTARAALVLTYLAVASA). Disordered stretches follow at residues 41–85 (VGYA…EATP) and 120–175 (LQHP…PSPD). Composition is skewed to polar residues over residues 71-85 (GQSQ…EATP) and 146-156 (NAAQHCQQDRS). 2 repeat units span residues 150 to 279 (HCQQ…QPHY) and 283 to 405 (ACPS…YPNY). The tract at residues 150 to 405 (HCQQDRSQGG…FARRAPYPNY (256 aa)) is 2 X approximate repeats. N-linked (GlcNAc...) asparagine glycosylation is present at asparagine 354. Asparagine 444 carries N-linked (GlcNAc...) (complex) asparagine glycosylation. The segment at 515–540 (ENAKGQGEQGSTGGTNISSTSEPKEE) is disordered. The segment covering 528-540 (GTNISSTSEPKEE) has biased composition (low complexity). N-linked (GlcNAc...) asparagine glycosylation is present at asparagine 530.

As to quaternary structure, interacts (via C-terminus) with HSPG2 (via C-terminus). Interacts with EFEMP1/FBLN3 and LAMB3. Interacts with MMP9. As to expression, expressed in breast cancer tissues. Little or no expression observed in normal breast tissues. Expressed in skin; wide expression is observed throughout the dermis with minimal expression in the epidermis.

It localises to the secreted. Its subcellular location is the extracellular space. The protein localises to the extracellular matrix. Functionally, involved in endochondral bone formation as negative regulator of bone mineralization. Stimulates the proliferation of endothelial cells and promotes angiogenesis. Inhibits MMP9 proteolytic activity. This Homo sapiens (Human) protein is Extracellular matrix protein 1 (ECM1).